Reading from the N-terminus, the 249-residue chain is 5-amino-6-(5-phospho-D-ribitylamino)uracil phosphatase YcsE (249 aa).

The Nucleophile role is filled by aspartate 16. Aspartate 16 is a binding site for Mg(2+). Methionine 17 lines the phosphate pocket. Aspartate 18 serves as a coordination point for Mg(2+). Phosphate contacts are provided by residues 50–51 (TG) and lysine 177. Aspartate 200 and serine 201 together coordinate Mg(2+). Residue asparagine 203 coordinates phosphate.

Belongs to the HAD-like hydrolase superfamily. Cof family. Mg(2+) is required as a cofactor.

The catalysed reaction is 5-amino-6-(5-phospho-D-ribitylamino)uracil + H2O = 5-amino-6-(D-ribitylamino)uracil + phosphate. It participates in cofactor biosynthesis; riboflavin biosynthesis; 5-amino-6-(D-ribitylamino)uracil from GTP: step 4/4. In terms of biological role, catalyzes the dephosphorylation of the riboflavin precursor 5-amino-6-(5-phospho-D-ribitylamino)uracil and of flavin mononucleotide (FMN) in vitro. To a lesser extent, may also catalyze the dephosphorylation of a broad range of substrates such as phosphorylated sugars and triphosphate nucleotides in vitro. This is 5-amino-6-(5-phospho-D-ribitylamino)uracil phosphatase YcsE (ycsE) from Bacillus subtilis (strain 168).